A 298-amino-acid chain; its full sequence is Protoheme IX farnesyltransferase (298 aa).

9 consecutive transmembrane segments (helical) span residues 16–36 (VVAL…PDMP), 45–65 (ALGF…NQLL), 93–113 (VFAG…VNVI), 114–134 (TAVL…VYLK), 141–161 (IVIG…AVTG), 172–192 (SLLV…LAIF), 223–243 (VLLA…VFYL), 244–264 (GGAI…LNPP), and 277–297 (IVYL…LPWV).

It belongs to the UbiA prenyltransferase family. Protoheme IX farnesyltransferase subfamily.

It localises to the cell inner membrane. The catalysed reaction is heme b + (2E,6E)-farnesyl diphosphate + H2O = Fe(II)-heme o + diphosphate. The protein operates within porphyrin-containing compound metabolism; heme O biosynthesis; heme O from protoheme: step 1/1. Its function is as follows. Converts heme B (protoheme IX) to heme O by substitution of the vinyl group on carbon 2 of heme B porphyrin ring with a hydroxyethyl farnesyl side group. This is Protoheme IX farnesyltransferase from Xanthomonas euvesicatoria pv. vesicatoria (strain 85-10) (Xanthomonas campestris pv. vesicatoria).